A 521-amino-acid chain; its full sequence is Bifunctional purine biosynthesis protein PurH (521 aa).

The MGS-like domain occupies 1–145 (MIKQALISVS…KNHRDVTVVV (145 aa)).

The protein belongs to the PurH family.

It catalyses the reaction (6R)-10-formyltetrahydrofolate + 5-amino-1-(5-phospho-beta-D-ribosyl)imidazole-4-carboxamide = 5-formamido-1-(5-phospho-D-ribosyl)imidazole-4-carboxamide + (6S)-5,6,7,8-tetrahydrofolate. The catalysed reaction is IMP + H2O = 5-formamido-1-(5-phospho-D-ribosyl)imidazole-4-carboxamide. It participates in purine metabolism; IMP biosynthesis via de novo pathway; 5-formamido-1-(5-phospho-D-ribosyl)imidazole-4-carboxamide from 5-amino-1-(5-phospho-D-ribosyl)imidazole-4-carboxamide (10-formyl THF route): step 1/1. It functions in the pathway purine metabolism; IMP biosynthesis via de novo pathway; IMP from 5-formamido-1-(5-phospho-D-ribosyl)imidazole-4-carboxamide: step 1/1. This Burkholderia pseudomallei (strain 1106a) protein is Bifunctional purine biosynthesis protein PurH.